The primary structure comprises 387 residues: Proteinase R (387 aa).

The first 21 residues, 1–21 (MRLSILLGLLPLAPRPPAVDA), serve as a signal peptide directing secretion. Positions 22–108 (VEQRSEPAPL…IEQDAIVNIN (87 aa)) are excised as a propeptide. One can recognise an Inhibitor I9 domain in the interval 42–107 (KYIVKLKEGS…YIEQDAIVNI (66 aa)). Residues 115–387 (PWGLARISST…NLLAYNNYQG (273 aa)) form the Peptidase S8 domain. Position 124 (Thr124) interacts with Ca(2+). 2 disulfide bridges follow: Cys142/Cys231 and Cys286/Cys357. Residues Asp147 and His177 each act as charge relay system in the active site. Asp308 is a Ca(2+) binding site. Ser332 serves as the catalytic Charge relay system. Asp368 provides a ligand contact to Ca(2+).

The protein belongs to the peptidase S8 family. It depends on Ca(2+) as a cofactor.

Its function is as follows. Serine proteinase. This chain is Proteinase R (PROR), found in Parengyodontium album (Tritirachium album).